A 533-amino-acid chain; its full sequence is L-aspartate oxidase (533 aa).

Residues 16–19 (SGAA), lysine 38, 45–52 (ATFYAQGG), and aspartate 223 each bind FAD. Arginine 290 (proton donor/acceptor) is an active-site residue. Residues glutamate 375 and 391-392 (SL) each bind FAD.

The protein belongs to the FAD-dependent oxidoreductase 2 family. NadB subfamily. FAD is required as a cofactor.

Its subcellular location is the cytoplasm. It carries out the reaction L-aspartate + O2 = iminosuccinate + H2O2. The protein operates within cofactor biosynthesis; NAD(+) biosynthesis; iminoaspartate from L-aspartate (oxidase route): step 1/1. In terms of biological role, catalyzes the oxidation of L-aspartate to iminoaspartate, the first step in the de novo biosynthesis of NAD(+). The polypeptide is L-aspartate oxidase (nadB) (Yersinia pestis).